Reading from the N-terminus, the 158-residue chain is SsrA-binding protein (158 aa).

A disordered region spans residues 131 to 158; sequence YDKRQTLRERQDKREADRAMSSHRRLGE.

It belongs to the SmpB family.

It localises to the cytoplasm. Required for rescue of stalled ribosomes mediated by trans-translation. Binds to transfer-messenger RNA (tmRNA), required for stable association of tmRNA with ribosomes. tmRNA and SmpB together mimic tRNA shape, replacing the anticodon stem-loop with SmpB. tmRNA is encoded by the ssrA gene; the 2 termini fold to resemble tRNA(Ala) and it encodes a 'tag peptide', a short internal open reading frame. During trans-translation Ala-aminoacylated tmRNA acts like a tRNA, entering the A-site of stalled ribosomes, displacing the stalled mRNA. The ribosome then switches to translate the ORF on the tmRNA; the nascent peptide is terminated with the 'tag peptide' encoded by the tmRNA and targeted for degradation. The ribosome is freed to recommence translation, which seems to be the essential function of trans-translation. In Clavibacter michiganensis subsp. michiganensis (strain NCPPB 382), this protein is SsrA-binding protein.